We begin with the raw amino-acid sequence, 250 residues long: Enoyl-[acyl-carrier-protein] reductase [NADPH] FabL (250 aa).

NADP(+)-binding positions include 13–16 (SRGV), 36–38 (ARS), 62–63 (NV), and asparagine 89. Catalysis depends on proton acceptor residues tyrosine 151 and lysine 158. Residues lysine 158 and 187-189 (IDT) each bind NADP(+).

The protein belongs to the short-chain dehydrogenases/reductases (SDR) family. In terms of assembly, homotetramer.

The catalysed reaction is a 2,3-saturated acyl-[ACP] + NADP(+) = a (2E)-enoyl-[ACP] + NADPH + H(+). It carries out the reaction (2E)-butenoyl-[ACP] + NADPH + H(+) = butanoyl-[ACP] + NADP(+). It participates in lipid metabolism; fatty acid biosynthesis. Inhibited by triclosan. Catalyzes the reduction of a carbon-carbon double bond in an enoyl moiety that is covalently linked to an acyl carrier protein (ACP). It confers resistance to triclosan. This is Enoyl-[acyl-carrier-protein] reductase [NADPH] FabL (fabL) from Bacillus subtilis (strain 168).